Reading from the N-terminus, the 177-residue chain is Large ribosomal subunit protein uL6 (177 aa).

Belongs to the universal ribosomal protein uL6 family. In terms of assembly, part of the 50S ribosomal subunit.

Functionally, this protein binds to the 23S rRNA, and is important in its secondary structure. It is located near the subunit interface in the base of the L7/L12 stalk, and near the tRNA binding site of the peptidyltransferase center. The sequence is that of Large ribosomal subunit protein uL6 from Pectobacterium carotovorum subsp. carotovorum (strain PC1).